We begin with the raw amino-acid sequence, 195 residues long: uncharacterized protein (195 aa).

The segment covering 1–11 (MDYIVSPTSSE) has biased composition (polar residues). A disordered region spans residues 1 to 118 (MDYIVSPTSS…LDTEGGFVLS (118 aa)). The segment covering 35 to 46 (SPEDITDSDEQN) has biased composition (acidic residues). Positions 47–63 (DTTTTTSEMSSTSSVPS) are enriched in low complexity. Over residues 82 to 93 (SDSKLIFDSDNK) the composition is skewed to basic and acidic residues. The span at 94-110 (DQDDEDDEDDEELEGLD) shows a compositional bias: acidic residues.

This is an uncharacterized protein from Acanthamoeba polyphaga mimivirus (APMV).